The chain runs to 464 residues: Cysteine--tRNA ligase (464 aa).

Residue Cys28 coordinates Zn(2+). Positions 30–40 match the 'HIGH' region motif; it reads VTVYDFCHIGH. Residues Cys209, His234, and Glu238 each contribute to the Zn(2+) site. Positions 266-270 match the 'KMSKS' region motif; the sequence is KMSKS. Lys269 serves as a coordination point for ATP.

It belongs to the class-I aminoacyl-tRNA synthetase family. In terms of assembly, monomer. The cofactor is Zn(2+).

The protein localises to the cytoplasm. It catalyses the reaction tRNA(Cys) + L-cysteine + ATP = L-cysteinyl-tRNA(Cys) + AMP + diphosphate. The sequence is that of Cysteine--tRNA ligase (cysS) from Buchnera aphidicola subsp. Acyrthosiphon pisum (strain APS) (Acyrthosiphon pisum symbiotic bacterium).